We begin with the raw amino-acid sequence, 449 residues long: Integrator complex subunit 15 (449 aa).

This sequence belongs to the Integrator subunit 15 family. As to quaternary structure, component of the Integrator complex, composed of core subunits INTS1, INTS2, INTS3, INTS4, INTS5, INTS6, INTS7, INTS8, INTS9/RC74, INTS10, INTS11/CPSF3L, INTS12, INTS13, INTS14 and INTS15. The core complex associates with protein phosphatase 2A subunits PPP2CA and PPP2R1A, to form the Integrator-PP2A (INTAC) complex. INTS15 is part of the tail subcomplex, composed of INTS10, INTS13, INTS14 and INTS15.

It localises to the nucleus. It is found in the chromosome. Component of the integrator complex, a multiprotein complex that terminates RNA polymerase II (Pol II) transcription in the promoter-proximal region of genes. The integrator complex provides a quality checkpoint during transcription elongation by driving premature transcription termination of transcripts that are unfavorably configured for transcriptional elongation: the complex terminates transcription by (1) catalyzing dephosphorylation of the C-terminal domain (CTD) of Pol II subunit POLR2A/RPB1 and SUPT5H/SPT5, (2) degrading the exiting nascent RNA transcript via endonuclease activity and (3) promoting the release of Pol II from bound DNA. The integrator complex is also involved in terminating the synthesis of non-coding Pol II transcripts, such as enhancer RNAs (eRNAs), small nuclear RNAs (snRNAs), telomerase RNAs and long non-coding RNAs (lncRNAs). INTS15 is part of the integrator tail module that acts as a platform for the recruitment of transcription factors at promoters. Within the integrator complex, INTS15 is required to bridge different integrator modules. This chain is Integrator complex subunit 15, found in Homo sapiens (Human).